The following is a 290-amino-acid chain: Large ribosomal subunit protein uL3 (290 aa).

Q152 carries the N5-methylglutamine modification. The disordered stretch occupies residues 250-290 (ARLAEEQAAAEAESLAQAEAEIAAEGSDAAPEGDADKKDGE). A compositionally biased stretch (low complexity) spans 255–274 (EQAAAEAESLAQAEAEIAAE).

This sequence belongs to the universal ribosomal protein uL3 family. As to quaternary structure, part of the 50S ribosomal subunit. Forms a cluster with proteins L14 and L19. In terms of processing, methylated by PrmB.

In terms of biological role, one of the primary rRNA binding proteins, it binds directly near the 3'-end of the 23S rRNA, where it nucleates assembly of the 50S subunit. The chain is Large ribosomal subunit protein uL3 from Jannaschia sp. (strain CCS1).